We begin with the raw amino-acid sequence, 423 residues long: Putative competence-damage inducible protein (423 aa).

Belongs to the CinA family.

The polypeptide is Putative competence-damage inducible protein (Streptococcus pyogenes serotype M6 (strain ATCC BAA-946 / MGAS10394)).